The chain runs to 207 residues: Thiamine-phosphate synthase (207 aa).

Residues 37–41 (QLREK) and Asn69 each bind 4-amino-2-methyl-5-(diphosphooxymethyl)pyrimidine. The Mg(2+) site is built by Asp70 and Asp89. Residue Ser108 coordinates 4-amino-2-methyl-5-(diphosphooxymethyl)pyrimidine. A 2-[(2R,5Z)-2-carboxy-4-methylthiazol-5(2H)-ylidene]ethyl phosphate-binding site is contributed by 134 to 136 (TGS). Lys137 contacts 4-amino-2-methyl-5-(diphosphooxymethyl)pyrimidine. 2-[(2R,5Z)-2-carboxy-4-methylthiazol-5(2H)-ylidene]ethyl phosphate-binding positions include Gly165 and 185-186 (IS).

The protein belongs to the thiamine-phosphate synthase family. Mg(2+) serves as cofactor.

It carries out the reaction 2-[(2R,5Z)-2-carboxy-4-methylthiazol-5(2H)-ylidene]ethyl phosphate + 4-amino-2-methyl-5-(diphosphooxymethyl)pyrimidine + 2 H(+) = thiamine phosphate + CO2 + diphosphate. The enzyme catalyses 2-(2-carboxy-4-methylthiazol-5-yl)ethyl phosphate + 4-amino-2-methyl-5-(diphosphooxymethyl)pyrimidine + 2 H(+) = thiamine phosphate + CO2 + diphosphate. It catalyses the reaction 4-methyl-5-(2-phosphooxyethyl)-thiazole + 4-amino-2-methyl-5-(diphosphooxymethyl)pyrimidine + H(+) = thiamine phosphate + diphosphate. The protein operates within cofactor biosynthesis; thiamine diphosphate biosynthesis; thiamine phosphate from 4-amino-2-methyl-5-diphosphomethylpyrimidine and 4-methyl-5-(2-phosphoethyl)-thiazole: step 1/1. Its function is as follows. Condenses 4-methyl-5-(beta-hydroxyethyl)thiazole monophosphate (THZ-P) and 2-methyl-4-amino-5-hydroxymethyl pyrimidine pyrophosphate (HMP-PP) to form thiamine monophosphate (TMP). This is Thiamine-phosphate synthase from Desulfitobacterium hafniense (strain Y51).